Here is a 521-residue protein sequence, read N- to C-terminus: Envelope glycoprotein (521 aa).

A signal peptide spans 1–20; the sequence is MVDSTIRLVATIFLISLTQQ. N-linked (GlcNAc...) asparagine; by host glycans are attached at residues Asn44, Asn158, Asn189, and Asn396. A helical transmembrane segment spans residues 501-517; the sequence is ISWVVVIGVVLVGVCLM.

As to quaternary structure, homooligomer; disulfide-linked (possibly homodimer).

It is found in the virion membrane. Functionally, attaches the virus to host cellular receptor and later induces fusion of virion with host membrane. This Dhori virus (strain Indian/1313/61) (Dho) protein is Envelope glycoprotein (P4).